Reading from the N-terminus, the 712-residue chain is Polyribonucleotide nucleotidyltransferase (712 aa).

Residues Asp-487 and Asp-493 each coordinate Mg(2+). Positions 554–613 (PKIITMTINPDKIRDVIGPSGKQINKIIEETGVKIDIEQDGTVFISSINQEMNDKAKKII) constitute a KH domain. The 69-residue stretch at 623-691 (GEIYEAKVKR…KQGRVNLSRK (69 aa)) folds into the S1 motif domain.

It belongs to the polyribonucleotide nucleotidyltransferase family. The cofactor is Mg(2+).

The protein localises to the cytoplasm. The catalysed reaction is RNA(n+1) + phosphate = RNA(n) + a ribonucleoside 5'-diphosphate. Its function is as follows. Involved in mRNA degradation. Catalyzes the phosphorolysis of single-stranded polyribonucleotides processively in the 3'- to 5'-direction. The chain is Polyribonucleotide nucleotidyltransferase from Bacillus cereus (strain ATCC 14579 / DSM 31 / CCUG 7414 / JCM 2152 / NBRC 15305 / NCIMB 9373 / NCTC 2599 / NRRL B-3711).